Here is a 4454-residue protein sequence, read N- to C-terminus: E3 ubiquitin-protein ligase HUWE1 (4454 aa).

Residues 521–575 (RASSSNSSTSISGPGPGPGPGPGPGPGPGPGPGPGPGLGPSLGPGPGPGPRPGVQ) form a disordered region. Over residues 523-533 (SSSNSSTSISG) the composition is skewed to low complexity. Residues 535 to 571 (GPGPGPGPGPGPGPGPGPGPGPGLGPSLGPGPGPGPR) are compositionally biased toward pro residues. A phosphoserine mark is found at Ser724 and Ser725. Disordered regions lie at residues 781–834 (QKAD…VVGT), 1054–1077 (DEKAGTTQGGKRSDGEQDGTAGSM), and 1094–1114 (TLAPMETDEPSSSDSKGKSKI). Over residues 801 to 811 (ASSEDEEEEEV) the composition is skewed to acidic residues. Over residues 813 to 832 (AMQSFNSAQQNETEPNQQVV) the composition is skewed to polar residues. Ser816 bears the Phosphoserine mark. Ser1160 is subject to Phosphoserine. A compositionally biased stretch (basic and acidic residues) spans 1367–1378 (LSKEKEGSRGEE). Residues 1367–1396 (LSKEKEGSRGEEEAGQEEGGSRREPQVNQQ) form a disordered region. The UBA domain occupies 1392–1431 (QVNQQQLQQLMDMGFTREHAMEALLNTSTMEQATEYLLTH). Phosphoserine is present on residues Ser1444, Ser1446, Ser1458, and Ser1471. Positions 1446–1465 (SEEDQMMRAIAMSLGQDIPM) constitute a UIM domain. The segment at 1472–1491 (PEEVACRKEEEERKAREKQE) is disordered. One can recognise a WWE domain in the interval 1679 to 1756 (RAQMTKYLQS…ETGNRRPVML (78 aa)). The interval 1766-1802 (KNSKSSNGQELEKTLEESKETDIKRKENKGNDIPLAL) is disordered. Positions 1775-1795 (ELEKTLEESKETDIKRKENKG) are enriched in basic and acidic residues. Ser1983 bears the Phosphoserine mark. 3 disordered regions span residues 2095–2142 (APAE…SKPL), 2339–2420 (SLFG…QEMQ), and 2433–2556 (LERD…ASPL). The span at 2097–2112 (AETSTTGTSQGEGAST) shows a compositional bias: low complexity. Thr2112 bears the Phosphothreonine mark. Basic and acidic residues predominate over residues 2114-2134 (EETREGKKDKEGDRTSEEGKQ). Low complexity predominate over residues 2339–2368 (SLFGSKSASSKSKSEQDAQGASQDSSSHQQ). Ser2343 carries the phosphoserine modification. Lys2344 carries the N6-acetyllysine modification. 2 stretches are compositionally biased toward acidic residues: residues 2372 to 2383 (EPGEAEVQEEDH) and 2391 to 2402 (ADGDIMDGEAET). 3 positions are modified to phosphoserine: Ser2439, Ser2442, and Ser2468. Residues 2465-2475 (SNLSQASTLQA) show a composition bias toward polar residues. Residues 2485–2549 (DPEDEEEHTQ…SEMELDEDYP (65 aa)) are compositionally biased toward acidic residues. 3 positions are modified to phosphoserine: Ser2604, Ser2609, and Ser2612. Thr2631 carries the post-translational modification Phosphothreonine. Residues Ser2661, Ser2672, and Ser2696 each carry the phosphoserine modification. Residues 2781 to 2793 (IIDKGKEDKENRD) are compositionally biased toward basic and acidic residues. Disordered regions lie at residues 2781–3047 (IIDK…GVDP) and 3113–3136 (QQRAEQQRRELAQNASSDTPMDPV). A compositionally biased stretch (polar residues) spans 2794 to 2813 (QSAQCTVSKTNDSTEQNVSD). The segment covering 2815-2849 (TPMPDSYPTTPSSTDAPTSESKETLGTLQPSQQQP) has biased composition (low complexity). The residue at position 2828 (Thr2828) is a Phosphothreonine. 3 stretches are compositionally biased toward polar residues: residues 2895–2912 (AETTQMELSPAPTITSLS), 2924–2941 (AVSSQLEGSPMDTSSLAS), and 2954–2967 (AGSSEQPTAGSSTP). A phosphoserine mark is found at Ser2903, Ser2910, Ser2912, Ser2938, Ser2964, and Ser2965. Residue Thr2966 is modified to Phosphothreonine. Positions 2990–3009 (PPEDSSPPASSESSSTRDSA) are enriched in low complexity. Ser2995 carries the phosphoserine modification. Phosphoserine occurs at positions 3193, 3194, 3199, 3204, and 3212. Position 3226 is an omega-N-methylarginine (Arg3226). Disordered regions lie at residues 3320-3343 (PKLSTSEERGKKSSKSCASSSHEN), 3431-3458 (QRTKETNCESDRERGSKQACSPCSSQSS), 3482-3501 (GKNSVKSVPVSAGGEGETSL), 3548-3590 (SEVQ…TTPV), and 3615-3642 (TPTTATTTVSTSTTKGNKSPAKVGEGGS). The segment covering 3432–3446 (RTKETNCESDRERGS) has biased composition (basic and acidic residues). A compositionally biased stretch (low complexity) spans 3447–3458 (KQACSPCSSQSS). Low complexity-rich tracts occupy residues 3552-3579 (TNSSNSGSSTAATSNTSTTTTTTTATAP) and 3615-3628 (TPTTATTTVSTSTT). Ser3633, Ser3740, Ser3830, Ser3835, Ser3837, and Ser3838 each carry phosphoserine. Residues 3815 to 3836 (TRRANKKAKQTGRLGSSGLGSA) are disordered. The segment covering 3826-3836 (GRLGSSGLGSA) has biased composition (low complexity). 2 disordered regions span residues 3859–3927 (EGQR…LPLL) and 3974–4028 (RESK…SSSL). A compositionally biased stretch (polar residues) spans 3871-3880 (TSESSNQSET). Phosphoserine is present on residues Ser3887, Ser3895, and Ser3907. Residues 3894–3905 (PSPSAQDTQSIV) show a composition bias toward polar residues. At Thr3910 the chain carries Phosphothreonine. Composition is skewed to basic and acidic residues over residues 3913–3922 (GEKEKEERPP) and 3974–3995 (RESKPPVRDTRESQLAHIKDEP). A phosphoserine mark is found at Ser3986 and Ser3999. A compositionally biased stretch (pro residues) spans 3996–4005 (PPLSPAPLTP). Phosphothreonine occurs at positions 4004 and 4007. Positions 4018 to 4028 (EPSSMHISSSL) are enriched in polar residues. Residues 4118 to 4454 (SPEEMKNRLY…QECSEGFGLA (337 aa)) enclose the HECT domain. Tyr4351 is subject to Phosphotyrosine. Cys4421 functions as the Glycyl thioester intermediate in the catalytic mechanism.

Belongs to the UPL family. TOM1/PTR1 subfamily. In terms of assembly, interacts with isoform p14ARF of CDKN2A which strongly inhibits HUWE1 ubiquitin ligase activity. Interacts with MYCN, POLB and CDC6. Interacts with isoform 2 of PA2G4. Interacts with NR1D1. Interacts with AMBRA1. Interacts with HAPSTR1. Interacts with HAPSTR2. In hepatocytes, interacts with PAQR3; the interaction promotes PPARA poylubiquitination and STUB1-mediated degradation. Phosphorylated on tyrosine, phosphorylation is probably required for its ability to inhibit TP53 transactivation. As to expression, widely expressed.

It is found in the cytoplasm. The protein resides in the nucleus. The protein localises to the mitochondrion. The catalysed reaction is S-ubiquitinyl-[E2 ubiquitin-conjugating enzyme]-L-cysteine + [acceptor protein]-L-lysine = [E2 ubiquitin-conjugating enzyme]-L-cysteine + N(6)-ubiquitinyl-[acceptor protein]-L-lysine.. It participates in protein modification; protein ubiquitination. In terms of biological role, E3 ubiquitin-protein ligase which mediates ubiquitination and subsequent proteasomal degradation of target proteins. Regulates apoptosis by catalyzing the polyubiquitination and degradation of MCL1. Mediates monoubiquitination of DNA polymerase beta (POLB) at 'Lys-41', 'Lys-61' and 'Lys-81', thereby playing a role in base-excision repair. Also ubiquitinates the p53/TP53 tumor suppressor and core histones including H1, H2A, H2B, H3 and H4. Ubiquitinates MFN2 to negatively regulate mitochondrial fusion in response to decreased stearoylation of TFRC. Ubiquitination of MFN2 also takes place following induction of mitophagy; AMBRA1 acts as a cofactor for HUWE1-mediated ubiquitination. Regulates neural differentiation and proliferation by catalyzing the polyubiquitination and degradation of MYCN. May regulate abundance of CDC6 after DNA damage by polyubiquitinating and targeting CDC6 to degradation. Mediates polyubiquitination of PA2G4. Acts in concert with MYCBP2 to regulate the circadian clock gene expression by promoting the lithium-induced ubiquination and degradation of NR1D1. Binds to an upstream initiator-like sequence in the preprodynorphin gene. Mediates HAPSTR1 degradation, but is also a required cofactor in the pathway by which HAPSTR1 governs stress signaling. Acts as a regulator of the JNK and NF-kappa-B signaling pathways by mediating assembly of heterotypic 'Lys-63'-/'Lys-48'-linked branched ubiquitin chains that are then recognized by TAB2: HUWE1 mediates branching of 'Lys-48'-linked chains of substrates initially modified with 'Lys-63'-linked conjugates by TRAF6. 'Lys-63'-/'Lys-48'-linked branched ubiquitin chains protect 'Lys-63'-linkages from CYLD deubiquitination. Ubiquitinates PPARA in hepatocytes. The protein is E3 ubiquitin-protein ligase HUWE1 (Huwe1) of Rattus norvegicus (Rat).